Here is an 831-residue protein sequence, read N- to C-terminus: Heat shock 70 kDa protein 14 (831 aa).

2 disordered regions span residues 503–579 and 786–831; these read EEVE…KKKV and TKPK…EGST. Residues 509-526 are compositionally biased toward basic and acidic residues; it reads VTKEHSEETTKMDSDKAS. The residue at position 533 (serine 533) is a Phosphoserine.

This sequence belongs to the heat shock protein 70 (TC 1.A.33) family. HSP110/SSE subfamily. As to quaternary structure, interacts with HTT1 in both cytoplasm and nucleus. Constitutively expressed.

The protein localises to the cytoplasm. The protein resides in the nucleus. In terms of biological role, in cooperation with other chaperones, Hsp70s are key components that facilitate folding of de novo synthesized proteins, assist translocation of precursor proteins into organelles, and are responsible for degradation of damaged protein under stress conditions. The polypeptide is Heat shock 70 kDa protein 14 (HSP70-14) (Arabidopsis thaliana (Mouse-ear cress)).